The sequence spans 667 residues: Long-chain-fatty-acid--CoA ligase ACSBG2 (667 aa).

Residues 227–235, 418–423, Asp496, Arg511, and Arg624 each bind ATP; these read TSGTTGTPK and EIYGMS.

The protein belongs to the ATP-dependent AMP-binding enzyme family. Bubblegum subfamily. In terms of tissue distribution, testis- and brainstem-specific. Expressed in pubertal and adult testis. Enriched in germ cells and Sertoli cells while present at a lower level in Leydig cells. Present in testicular Sertoli cells and large motoneurons in the medulla oblongata and cervical spinal cord (at protein level).

It is found in the cytoplasm. It localises to the membrane. It catalyses the reaction a long-chain fatty acid + ATP + CoA = a long-chain fatty acyl-CoA + AMP + diphosphate. It carries out the reaction (5Z,8Z,11Z,14Z)-eicosatetraenoate + ATP + CoA = (5Z,8Z,11Z,14Z)-eicosatetraenoyl-CoA + AMP + diphosphate. The catalysed reaction is hexadecanoate + ATP + CoA = hexadecanoyl-CoA + AMP + diphosphate. The enzyme catalyses (9Z)-octadecenoate + ATP + CoA = (9Z)-octadecenoyl-CoA + AMP + diphosphate. It catalyses the reaction (9Z,12Z)-octadecadienoate + ATP + CoA = (9Z,12Z)-octadecadienoyl-CoA + AMP + diphosphate. It carries out the reaction tetracosanoate + ATP + CoA = tetracosanoyl-CoA + AMP + diphosphate. Its function is as follows. Catalyzes the conversion of fatty acids such as long chain and very long-chain fatty acids to their active form acyl-CoAs for both synthesis of cellular lipids, and degradation via beta-oxidation. Can activate diverse saturated, monosaturated and polyunsaturated fatty acids. Has increased ability to activate oleic and linoleic acid. May play a role in spermatogenesis. This Mus musculus (Mouse) protein is Long-chain-fatty-acid--CoA ligase ACSBG2.